The primary structure comprises 376 residues: Succinyl-diaminopimelate desuccinylase (376 aa).

Histidine 66 contributes to the Zn(2+) binding site. Aspartate 68 is an active-site residue. Aspartate 99 is a Zn(2+) binding site. Glutamate 133 functions as the Proton acceptor in the catalytic mechanism. Zn(2+) contacts are provided by glutamate 134, glutamate 162, and histidine 349.

This sequence belongs to the peptidase M20A family. DapE subfamily. Homodimer. Zn(2+) is required as a cofactor. Co(2+) serves as cofactor.

The catalysed reaction is N-succinyl-(2S,6S)-2,6-diaminopimelate + H2O = (2S,6S)-2,6-diaminopimelate + succinate. Its pathway is amino-acid biosynthesis; L-lysine biosynthesis via DAP pathway; LL-2,6-diaminopimelate from (S)-tetrahydrodipicolinate (succinylase route): step 3/3. Its function is as follows. Catalyzes the hydrolysis of N-succinyl-L,L-diaminopimelic acid (SDAP), forming succinate and LL-2,6-diaminopimelate (DAP), an intermediate involved in the bacterial biosynthesis of lysine and meso-diaminopimelic acid, an essential component of bacterial cell walls. This Vesicomyosocius okutanii subsp. Calyptogena okutanii (strain HA) protein is Succinyl-diaminopimelate desuccinylase.